We begin with the raw amino-acid sequence, 129 residues long: uncharacterized protein (129 aa).

It belongs to the asfivirus C129R family.

The protein localises to the virion. In terms of biological role, plays a role in the inhibition of type I interferon signaling pathway. Mechanistically, specifically interacts with 2',3'-cGAMP and cleaves it via its phosphodiesterase activity. In turn, prevents 2',3'-cGAMP interaction with host ER-resident STING1 leading to inhibition of downstream signaling pathway and type I interferon production. This is an uncharacterized protein from African swine fever virus (isolate Pig/Kenya/KEN-50/1950) (ASFV).